Reading from the N-terminus, the 424-residue chain is Enolase (424 aa).

Q162 lines the (2R)-2-phosphoglycerate pocket. The active-site Proton donor is the E204. Positions 241, 284, and 311 each coordinate Mg(2+). (2R)-2-phosphoglycerate is bound by residues K336, R365, S366, and K387. Catalysis depends on K336, which acts as the Proton acceptor.

Belongs to the enolase family. The cofactor is Mg(2+).

It is found in the cytoplasm. It localises to the secreted. Its subcellular location is the cell surface. It catalyses the reaction (2R)-2-phosphoglycerate = phosphoenolpyruvate + H2O. The protein operates within carbohydrate degradation; glycolysis; pyruvate from D-glyceraldehyde 3-phosphate: step 4/5. Functionally, catalyzes the reversible conversion of 2-phosphoglycerate (2-PG) into phosphoenolpyruvate (PEP). It is essential for the degradation of carbohydrates via glycolysis. The polypeptide is Enolase (Agrobacterium fabrum (strain C58 / ATCC 33970) (Agrobacterium tumefaciens (strain C58))).